Consider the following 333-residue polypeptide: Putative pectinesterase 14 (333 aa).

Residues 1 to 16 (MLFFILFLSIISPIES) form the signal peptide. 2 N-linked (GlcNAc...) asparagine glycosylation sites follow: Asn108 and Asn114. Residue Thr116 participates in substrate binding. Asn133 is a glycosylation site (N-linked (GlcNAc...) asparagine). Gln151 is a substrate binding site. The active-site Proton donor is the Asp174. The active-site Nucleophile is Asp195. Substrate is bound at residue Arg253. N-linked (GlcNAc...) asparagine glycans are attached at residues Asn302 and Asn323.

This sequence belongs to the pectinesterase family. In terms of tissue distribution, expressed in flower buds.

Its subcellular location is the secreted. It localises to the cell wall. It catalyses the reaction [(1-&gt;4)-alpha-D-galacturonosyl methyl ester](n) + n H2O = [(1-&gt;4)-alpha-D-galacturonosyl](n) + n methanol + n H(+). It functions in the pathway glycan metabolism; pectin degradation; 2-dehydro-3-deoxy-D-gluconate from pectin: step 1/5. Acts in the modification of cell walls via demethylesterification of cell wall pectin. This is Putative pectinesterase 14 (PME14) from Arabidopsis thaliana (Mouse-ear cress).